The sequence spans 493 residues: Sorting nexin-4 (493 aa).

Positions 1–67 (MDQDGFHSIA…KAGEAGDVGV (67 aa)) are disordered. The span at 37–48 (SISPSSAQPPAS) shows a compositional bias: low complexity. Positions 89–211 (WMDVQVREPA…DFLQSTEWSV (123 aa)) constitute a PX domain. A 1,2-diacyl-sn-glycero-3-phospho-(1D-myo-inositol-3-phosphate) is bound by residues Arg132, Lys158, and Arg177.

This sequence belongs to the sorting nexin family.

The protein localises to the cytoplasm. Its subcellular location is the cytosol. It is found in the preautophagosomal structure membrane. The protein resides in the endosome membrane. In terms of biological role, sorting nexin, involved in the separation or division of vacuoles throughout the entire life cycle of the cells. Involved in retrieval of late-Golgi SNAREs from post-Golgi endosomes to the trans-Golgi network, for cytoplasm to vacuole transport (Cvt), and autophagy of large cargos including mitophagy, pexophagy and glycophagy. The polypeptide is Sorting nexin-4 (SNX4) (Cryptococcus neoformans var. neoformans serotype D (strain B-3501A) (Filobasidiella neoformans)).